The sequence spans 360 residues: 3-dehydroquinate synthase (360 aa).

Residues Gly-105 to Asp-109, Thr-129 to Thr-130, Lys-142, Lys-151, and Thr-169 to Thr-172 contribute to the NAD(+) site. Zn(2+)-binding residues include Glu-184, His-247, and His-263.

This sequence belongs to the sugar phosphate cyclases superfamily. Dehydroquinate synthase family. Co(2+) is required as a cofactor. It depends on Zn(2+) as a cofactor. NAD(+) serves as cofactor.

Its subcellular location is the cytoplasm. It carries out the reaction 7-phospho-2-dehydro-3-deoxy-D-arabino-heptonate = 3-dehydroquinate + phosphate. The protein operates within metabolic intermediate biosynthesis; chorismate biosynthesis; chorismate from D-erythrose 4-phosphate and phosphoenolpyruvate: step 2/7. In terms of biological role, catalyzes the conversion of 3-deoxy-D-arabino-heptulosonate 7-phosphate (DAHP) to dehydroquinate (DHQ). The polypeptide is 3-dehydroquinate synthase (Acetivibrio thermocellus (strain ATCC 27405 / DSM 1237 / JCM 9322 / NBRC 103400 / NCIMB 10682 / NRRL B-4536 / VPI 7372) (Clostridium thermocellum)).